A 217-amino-acid polypeptide reads, in one-letter code: 3,4-dihydroxy-2-butanone 4-phosphate synthase (217 aa).

D-ribulose 5-phosphate-binding positions include 37–38, Asp42, 150–154, and Glu174; these read RE and RQGHT. Glu38 is a Mg(2+) binding site. His153 is a Mg(2+) binding site.

This sequence belongs to the DHBP synthase family. In terms of assembly, homodimer. The cofactor is Mg(2+). It depends on Mn(2+) as a cofactor.

The catalysed reaction is D-ribulose 5-phosphate = (2S)-2-hydroxy-3-oxobutyl phosphate + formate + H(+). It participates in cofactor biosynthesis; riboflavin biosynthesis; 2-hydroxy-3-oxobutyl phosphate from D-ribulose 5-phosphate: step 1/1. Catalyzes the conversion of D-ribulose 5-phosphate to formate and 3,4-dihydroxy-2-butanone 4-phosphate. The chain is 3,4-dihydroxy-2-butanone 4-phosphate synthase from Desulforamulus reducens (strain ATCC BAA-1160 / DSM 100696 / MI-1) (Desulfotomaculum reducens).